A 469-amino-acid polypeptide reads, in one-letter code: MGHQVLGLGIAGWSAARLLRAQGKEVWVWDEQDSELLRQRQAELEREGIPVHLGQPFQLLPGVKQVVVSPGIAWDHPLLQEARRQGIEVVGEAELAWPFLEHLPWVGITGTNGKSTTTALVAEMFKVAGLEGIPCGNIGLPLSQVALETWQGRRQPAWIVAELSSYQLEASRHLMQSSPGSPPRIGVWTTFTPDHLERHGTLERYAGFKARLLQRAQWRVVNGEDPYLFRRRQDWENTYWVSLQDPQADVFLRGSTLYIQGEAVAELEDFAERCPGSHNLQNLLLAAAAAHLAGIPNTAIQGAIRSFAGMPHRLERVAQIQVGSTPIRFVNDSKATNYEAGWVALNALSPPIILIAGGRAKQGDPSAWLRLIQAKVARVLLIGEAAPALAQALQEIRYTDLEILPTLDVAVERAFVAACSLAQALDNPAQPITVLLSPACASFDQYSSFEHRGHHFRACCQALVGSLEC.

Residue 110 to 116 coordinates ATP; that stretch reads GTNGKST.

Belongs to the MurCDEF family.

The protein resides in the cytoplasm. It carries out the reaction UDP-N-acetyl-alpha-D-muramoyl-L-alanine + D-glutamate + ATP = UDP-N-acetyl-alpha-D-muramoyl-L-alanyl-D-glutamate + ADP + phosphate + H(+). It participates in cell wall biogenesis; peptidoglycan biosynthesis. Its function is as follows. Cell wall formation. Catalyzes the addition of glutamate to the nucleotide precursor UDP-N-acetylmuramoyl-L-alanine (UMA). This is UDP-N-acetylmuramoylalanine--D-glutamate ligase from Synechococcus sp. (strain JA-3-3Ab) (Cyanobacteria bacterium Yellowstone A-Prime).